Here is a 223-residue protein sequence, read N- to C-terminus: Protein phosphatase 1 regulatory subunit 3C (223 aa).

Residues 104-209 (REQLTRKLVC…NNDGKNYSLH (106 aa)) form the CBM21 domain.

In terms of assembly, interacts with PPP1CC catalytic subunit of PP1 and associates with glycogen. Forms complexes with glycogen phosphorylase, glycogen synthase and phosphorylase kinase which is necessary for its regulation of PP1 activity.

Its function is as follows. Acts as a glycogen-targeting subunit for PP1 and regulates its activity. Activates glycogen synthase, reduces glycogen phosphorylase activity and limits glycogen breakdown. The chain is Protein phosphatase 1 regulatory subunit 3C from Xenopus tropicalis (Western clawed frog).